A 133-amino-acid chain; its full sequence is Small ribosomal subunit protein uS8 (133 aa).

Belongs to the universal ribosomal protein uS8 family. In terms of assembly, part of the 30S ribosomal subunit.

Its function is as follows. One of the primary rRNA binding proteins, it binds directly to 16S rRNA central domain where it helps coordinate assembly of the platform of the 30S subunit. This Aeropyrum pernix (strain ATCC 700893 / DSM 11879 / JCM 9820 / NBRC 100138 / K1) protein is Small ribosomal subunit protein uS8.